A 394-amino-acid chain; its full sequence is ATP phosphoribosyltransferase regulatory subunit (394 aa).

This sequence belongs to the class-II aminoacyl-tRNA synthetase family. HisZ subfamily. As to quaternary structure, heteromultimer composed of HisG and HisZ subunits.

It is found in the cytoplasm. The protein operates within amino-acid biosynthesis; L-histidine biosynthesis; L-histidine from 5-phospho-alpha-D-ribose 1-diphosphate: step 1/9. In terms of biological role, required for the first step of histidine biosynthesis. May allow the feedback regulation of ATP phosphoribosyltransferase activity by histidine. This chain is ATP phosphoribosyltransferase regulatory subunit, found in Pseudomonas aeruginosa (strain LESB58).